A 353-amino-acid polypeptide reads, in one-letter code: B1 bradykinin receptor (353 aa).

At 1–41 (MASQTLVVFQASNQSQLPPPNATLCDGAQEAWHLLHKVLPT) the chain is on the extracellular side. 2 N-linked (GlcNAc...) asparagine glycosylation sites follow: asparagine 13 and asparagine 21. A helical membrane pass occupies residues 42–62 (CVVAICSGGLLGNLFVLSVFL). The Cytoplasmic portion of the chain corresponds to 63 to 72 (VPRRRLNAAE). A helical transmembrane segment spans residues 73 to 93 (IYLAHLAASDLVFALGLPFWA). The Extracellular segment spans residues 94 to 110 (ETIRNGFHWPFGAPLCR). Cysteine 109 and cysteine 189 are oxidised to a cystine. Residues 111-131 (VVNGVIKANLFISIFLVVAIS) traverse the membrane as a helical segment. Residues 132-154 (RDRYRALVHPVASWRRRRRRHWA) are Cytoplasmic-facing. Residues 155–175 (QATCVLIWTAGGLLSIPTFLL) traverse the membrane as a helical segment. The Extracellular segment spans residues 176–207 (RSVQVVPELNVSACVLPFPHEAWAFVRTVELN). The N-linked (GlcNAc...) asparagine glycan is linked to asparagine 185. Residues 208–228 (VLGFLLPLAAILFFNYHILAA) form a helical membrane-spanning segment. The Cytoplasmic portion of the chain corresponds to 229–251 (LRGREQLSRTRCGGPRDGKTTAL). Residues 252–272 (ILTLVAVFLLCWTPYHVCAFL) form a helical membrane-spanning segment. Topologically, residues 273-295 (EFLLHVRAIRGCFWEDFTDLGLQ) are extracellular. Residues 296 to 316 (YTNFFAFINSCLNPVIYVFWG) traverse the membrane as a helical segment. Topologically, residues 317–353 (QLFRTKIWELYHRCLPRKLTAVSSSRRKEIFQIFWRN) are cytoplasmic. Cysteine 330 carries S-palmitoyl cysteine lipidation.

It belongs to the G-protein coupled receptor 1 family. Bradykinin receptor subfamily. BDKRB1 sub-subfamily.

It localises to the cell membrane. In terms of biological role, this is a receptor for bradykinin. Could be a factor in chronic pain and inflammation. The chain is B1 bradykinin receptor (BDKRB1) from Sus scrofa (Pig).